A 401-amino-acid polypeptide reads, in one-letter code: Enolase (401 aa).

(2R)-2-phosphoglycerate is bound at residue Gln154. The active-site Proton donor is Glu197. 3 residues coordinate Mg(2+): Asp233, Glu274, and Asp301. (2R)-2-phosphoglycerate is bound by residues Lys326, Arg355, Ser356, and Lys377. Residue Lys326 is the Proton acceptor of the active site.

Belongs to the enolase family. Mg(2+) serves as cofactor.

It is found in the cytoplasm. Its subcellular location is the secreted. The protein resides in the cell surface. It carries out the reaction (2R)-2-phosphoglycerate = phosphoenolpyruvate + H2O. It functions in the pathway carbohydrate degradation; glycolysis; pyruvate from D-glyceraldehyde 3-phosphate: step 4/5. Functionally, catalyzes the reversible conversion of 2-phosphoglycerate (2-PG) into phosphoenolpyruvate (PEP). It is essential for the degradation of carbohydrates via glycolysis. The polypeptide is Enolase (Thermoplasma acidophilum (strain ATCC 25905 / DSM 1728 / JCM 9062 / NBRC 15155 / AMRC-C165)).